Reading from the N-terminus, the 380-residue chain is Putative 8-amino-7-oxononanoate synthase (380 aa).

Arginine 18 lines the substrate pocket. Residue 106-107 participates in pyridoxal 5'-phosphate binding; the sequence is GY. A substrate-binding site is contributed by histidine 131. Residues serine 179, 205–208, and 236–239 contribute to the pyridoxal 5'-phosphate site; these read DEAH and TFGK. Residue lysine 239 is modified to N6-(pyridoxal phosphate)lysine. Residue threonine 352 coordinates substrate.

Belongs to the class-II pyridoxal-phosphate-dependent aminotransferase family. BioF subfamily. In terms of assembly, homodimer. Pyridoxal 5'-phosphate is required as a cofactor.

The enzyme catalyses 6-carboxyhexanoyl-[ACP] + L-alanine + H(+) = (8S)-8-amino-7-oxononanoate + holo-[ACP] + CO2. It functions in the pathway cofactor biosynthesis; biotin biosynthesis. Catalyzes the decarboxylative condensation of pimeloyl-[acyl-carrier protein] and L-alanine to produce 8-amino-7-oxononanoate (AON), [acyl-carrier protein], and carbon dioxide. In Neisseria gonorrhoeae (strain NCCP11945), this protein is Putative 8-amino-7-oxononanoate synthase (bioF).